A 3298-amino-acid chain; its full sequence is Protocadherin-16 (3298 aa).

An N-terminal signal peptide occupies residues 1–42; the sequence is MQKELGIVPSCPGMKSPRPHLLLPLLLLLLLLLGAGVPGAWG. 27 consecutive Cadherin domains span residues 43–143, 144–255, 256–362, 367–472, 474–578, 579–685, 686–790, 791–894, 895–1000, 1001–1111, 1112–1211, 1218–1324, 1333–1436, 1437–1546, 1547–1649, 1650–1751, 1752–1855, 1856–1960, 1965–2068, 2069–2171, 2172–2277, 2278–2376, 2377–2482, 2483–2602, 2603–2706, 2707–2813, and 2814–2933; these read QAGS…APAF, PQAR…APAF, NQSR…QPSM, LSAD…APAF, RQLY…EPQF, QRTF…PPQF, YPRE…PPIF, EQLQ…SPAF, PAPE…APRF, NSPT…DPTF, LAVA…SPTF, AGGG…PPDL, VPVV…APAF, ARDP…APVF, ASPS…APTF, QQQE…APTF, GSAH…APAF, PVPA…APTF, LRLR…GPRF, PRAS…APRF, LRPH…RPTI, PQPW…APAF, SQSL…APSF, TLSH…PPVF, TRAS…GPAF, PLNL…DPVF, and LAPA…APDL. At 43-2940 the chain is on the extracellular side; that stretch reads QAGSLDLQID…PDLNLLLVGA (2898 aa). N-linked (GlcNAc...) asparagine glycans are attached at residues asparagine 217, asparagine 256, and asparagine 402. Asparagine 584 carries an N-linked (GlcNAc...) asparagine glycan. The N-linked (GlcNAc...) asparagine glycan is linked to asparagine 1249. N-linked (GlcNAc...) asparagine glycosylation occurs at asparagine 1521. Asparagine 1718 is a glycosylation site (N-linked (GlcNAc...) asparagine). Asparagine 1996 carries N-linked (GlcNAc...) asparagine glycosylation. The segment at 2065-2094 is disordered; it reads GPRFPRASSEATIRENAPPGTPIVSPRAVH. Asparagine 2361, asparagine 2428, and asparagine 2569 each carry an N-linked (GlcNAc...) asparagine glycan. Asparagine 2761, asparagine 2792, and asparagine 2862 each carry an N-linked (GlcNAc...) asparagine glycan. The helical transmembrane segment at 2941-2961 threads the bilayer; it reads VAASLGVVVVLALAALVLGLV. Residues 2962-3298 are Cytoplasmic-facing; sequence RARSRKAEAA…EPPDDTELHI (337 aa). The disordered stretch occupies residues 2986-3040; the sequence is LQKLGREPPSPPPSEHLYHQTLPSYGGPGAGGPYPRGGSLDPSHSSGRGSAEAAE. Residues 3011 to 3020 show a composition bias toward gly residues; it reads GGPGAGGPYP. The residue at position 3055 (serine 3055) is a Phosphoserine. 2 disordered regions span residues 3062 to 3082 and 3233 to 3298; these read ARGP…TSCE and ASHR…ELHI. 2 stretches are compositionally biased toward low complexity: residues 3244-3266 and 3276-3289; these read SLSS…ARSP and GPSA…SGLE.

Heterophilic interaction with FAT4; this interaction affects their respective protein levels. Expressed in fibroblasts but not in melanocytes or keratinocytes.

The protein resides in the cell membrane. In terms of biological role, calcium-dependent cell-adhesion protein. Mediates functions in neuroprogenitor cell proliferation and differentiation. In the heart, has a critical role for proper morphogenesis of the mitral valve, acting in the regulation of cell migration involved in valve formation. The chain is Protocadherin-16 (DCHS1) from Homo sapiens (Human).